A 360-amino-acid chain; its full sequence is Phospho-N-acetylmuramoyl-pentapeptide-transferase (360 aa).

Helical transmembrane passes span 25 to 45 (RGILGVLTALCLSLFLGPWMI), 73 to 93 (TMGGALILSSIGISTLLWADL), 97 to 117 (YVWVVLLVTLLFGAIGWVDDY), 142 to 162 (VGAAIFLYTTAPSAVETTLII), 168 to 188 (ASIPLGIGFVVLTYFVIVGSS), 199 to 219 (GLAIMPTVMVGGALGIFCYLS), 236 to 256 (AGELIVFCGALIGAGLGFLWF), 263 to 283 (VFMGDVGALALGAALGTIAVI), 288 to 308 (IVLFIMGGVFVMETLSVVIQV), and 338 to 358 (VIVRFWIITVILVLVGLATLK).

It belongs to the glycosyltransferase 4 family. MraY subfamily. Requires Mg(2+) as cofactor.

It is found in the cell inner membrane. It catalyses the reaction UDP-N-acetyl-alpha-D-muramoyl-L-alanyl-gamma-D-glutamyl-meso-2,6-diaminopimeloyl-D-alanyl-D-alanine + di-trans,octa-cis-undecaprenyl phosphate = di-trans,octa-cis-undecaprenyl diphospho-N-acetyl-alpha-D-muramoyl-L-alanyl-D-glutamyl-meso-2,6-diaminopimeloyl-D-alanyl-D-alanine + UMP. Its pathway is cell wall biogenesis; peptidoglycan biosynthesis. Catalyzes the initial step of the lipid cycle reactions in the biosynthesis of the cell wall peptidoglycan: transfers peptidoglycan precursor phospho-MurNAc-pentapeptide from UDP-MurNAc-pentapeptide onto the lipid carrier undecaprenyl phosphate, yielding undecaprenyl-pyrophosphoryl-MurNAc-pentapeptide, known as lipid I. This Pseudomonas fluorescens (strain SBW25) protein is Phospho-N-acetylmuramoyl-pentapeptide-transferase.